The sequence spans 507 residues: RNA polymerase I-specific transcription initiation factor RRN11 (507 aa).

Polar residues predominate over residues lysine 37–proline 47. 2 disordered regions span residues lysine 37–lysine 76 and glycine 89–glutamate 124. The span at serine 97–glutamate 108 shows a compositional bias: acidic residues. A compositionally biased stretch (basic and acidic residues) spans glycine 109–glutamate 124.

In terms of assembly, component of the core factor (CF) complex, which consists of RRN6, RRN7 and RRN11. The CF heterotrimer may further dimerize to form a hexamer. RRN11 interacts with RRN6, RRN7 and SPT15.

The protein localises to the nucleus. It is found in the nucleolus. Functionally, acts as a component of the core factor (CF) complex which is essential for the initiation of rDNA transcription by RNA polymerase I. After binding of UAF (upstream activation factor) to an upstream element of the promoter, CF is recruited in a SPT15/TBP-dependent manner to form a preinitiation complex. The sequence is that of RNA polymerase I-specific transcription initiation factor RRN11 (RRN11) from Saccharomyces cerevisiae (strain ATCC 204508 / S288c) (Baker's yeast).